A 338-amino-acid chain; its full sequence is L-asparaginase 1 (338 aa).

Positions 4–329 (KSIYVAYTGG…ETIRKAMSQN (326 aa)) constitute an Asparaginase/glutaminase domain. The O-isoaspartyl threonine intermediate role is filled by threonine 14. Residues 59–61 (DSS) and 91–92 (TD) contribute to the substrate site.

This sequence belongs to the asparaginase 1 family. As to quaternary structure, homotetramer.

The protein localises to the cytoplasm. It catalyses the reaction L-asparagine + H2O = L-aspartate + NH4(+). This Escherichia coli O157:H7 protein is L-asparaginase 1 (ansA).